We begin with the raw amino-acid sequence, 1733 residues long: Serine-aspartate repeat-containing protein F (1733 aa).

The first 45 residues, 1–45 (MKKRRQGPINKRVDFLSNKVNKYSIRKFTVGTASILVGATLMFGA), serve as a signal peptide directing secretion. Positions 46 to 678 (ADNEAKAAED…GSSTAQGDNP (633 aa)) are ligand binding A region. Disordered stretches follow at residues 51–269 (KAAE…SVND) and 332–351 (PLAL…ASPR). A compositionally biased stretch (basic and acidic residues) spans 61–74 (ASKEEQKGSRDNEN). Composition is skewed to polar residues over residues 85-99 (GSHS…NNAT) and 146-168 (PKTS…DNLN). Residues 175-184 (KESKTDEHST) are compositionally biased toward basic and acidic residues. A compositionally biased stretch (polar residues) spans 186-226 (QAQMSTNKSNLDTNDSPTQSEKTSSQANNDSTDNQSAPSKQ). Basic and acidic residues predominate over residues 227–253 (LDSKPSEQKVYKTKFNDEPTQDVEHTT). Composition is skewed to polar residues over residues 255–266 (KLKTPSVSTDSS) and 336–346 (NRSQSKNSPHK). 4 CNA-B domains span residues 679 to 797 (TYSL…YLTP), 798 to 907 (KYNV…FYKP), 908 to 1018 (TYNL…YKTP), and 1019 to 1129 (KYSV…FDDD). The segment at 679–1129 (TYSLGDYVWL…SIDNGYFDDD (451 aa)) is type I collagen binding region. The tract at residues 862–890 (FETPEGYTPTKQNSGSDEGKDSNGTKTTV) is disordered. Residues 1085-1708 (KPEGMTQTTA…ANEDHDSKGT (624 aa)) are disordered. Residues 1107–1119 (EDVRVTITDHDDF) are compositionally biased toward basic and acidic residues. A compositionally biased stretch (acidic residues) spans 1125–1684 (YFDDDSDSDS…DSDSDSDSDS (560 aa)). Residues 1685 to 1706 (DSDKNAKDKLPDTGANEDHDSK) show a composition bias toward basic and acidic residues. The short motif at 1694 to 1698 (LPDTG) is the LPXTG sorting signal element. Pentaglycyl murein peptidoglycan amidated threonine is present on threonine 1697. A propeptide spans 1698-1733 (GANEDHDSKGTLLGTLFAGLGALLLGRRRKKDNKEK) (removed by sortase).

The protein belongs to the serine-aspartate repeat-containing protein (SDr) family.

The protein localises to the secreted. The protein resides in the cell wall. Its function is as follows. Binds to type I collagen via alpha-2(I) or alpha-1(I) chains, although its affinity for the alpha-1(I) chain is significantly higher. Involved in bacterial adherence to transcutaneous drivelines from explanted ventricular assist devices. This Staphylococcus epidermidis protein is Serine-aspartate repeat-containing protein F (sdrF).